The sequence spans 432 residues: MLFMVKFRWETEFKETDIGKIPKDWDVKKIKDIGEVAGGSTPSTKIKEYWGGDIPWITPKDLANYEYIYISRGERNITEKAVKECSLRIFPKGTILLTSRAPIGYVAIAKNPLTTNQGFRNIIPKDGVVSEYLYYLFKTKTMSEYLKDISGGSTFPELKGSTLKEVEIPYPSPEEQQKIATVLSYFDDLIENKKKQNEILEKIALELFKNWFIDFEPFKNEEFVYNDELDKEIPKGWEVKRLGDILKVESGSNAPQREIYFENAKIPFVRVKHLVKGVCIESSDFINELALKDYKMKLYNEKSIIFQKSGESLKEARVNIVPFKFTAVNHLAVIDSSMLNEKHYFIYCLLRFLLKEIVYSVKGTTLPYLKISDIENKYIIIPPQPILQKFHSLVQPLFEKIINNQKQIMVLKKIRDALLPKLVFGELRVEEL.

Belongs to the type-I restriction system S methylase family. The type I restriction/modification system is composed of three polypeptides R, M and S.

Its function is as follows. The specificity (S) subunit of a type I restriction enzyme; this subunit dictates DNA sequence specificity. The M and S subunits together form a methyltransferase (MTase) that methylates A-3 on the top and A-2 on the bottom strand of the sequence 5'-CCAN(5)GTR-3'. In the presence of the R subunit the complex can also act as an endonuclease, binding to the same target sequence but cutting the DNA some distance from this site. Whether the DNA is cut or modified depends on the methylation state of the target sequence. When the target site is unmodified, the DNA is cut. When the target site is hemimethylated, the complex acts as a maintenance MTase modifying the DNA so that both strands become methylated. After locating a non-methylated recognition site, the enzyme complex serves as a molecular motor that translocates DNA in an ATP-dependent manner until a collision occurs that triggers cleavage. The protein is Type I restriction enzyme MjaIX specificity subunit (hsdS) of Methanocaldococcus jannaschii (strain ATCC 43067 / DSM 2661 / JAL-1 / JCM 10045 / NBRC 100440) (Methanococcus jannaschii).